Consider the following 224-residue polypeptide: Vesicle transport through interaction with t-SNAREs homolog 1A (224 aa).

The Cytoplasmic portion of the chain corresponds to 1-199 (MSADFEGYEQ…GMLRRIIQNR (199 aa)). Coiled coils occupy residues 31–92 (PDEK…KRSR) and 106–185 (DAGN…GKSS). A helical; Anchor for type IV membrane protein transmembrane segment spans residues 200-220 (ILLVILGIIVVITILTAITFF). At 221 to 224 (VRGH) the chain is on the vesicular side.

Belongs to the VTI1 family. As to quaternary structure, interacts with distinct SNARE complexes that contain either STX5 or STX6. Interacts with NAPA and, to a lesser extent, with NAPG. Identified in a complex containing STX6, STX12, VAMP4 and VTI1A. In terms of tissue distribution, specifically expressed in the neuronal tissues cerebellum, cortex and hippocampus. Isoform 1/VTI1A is expressed in the same neuronal tissues but also in lung, liver, kidney and spleen.

Its subcellular location is the membrane. The protein localises to the cytoplasmic vesicle. It is found in the secretory vesicle. The protein resides in the synaptic vesicle membrane. It localises to the clathrin-coated vesicle membrane. Its subcellular location is the golgi apparatus membrane. In terms of biological role, V-SNARE that mediates vesicle transport pathways through interactions with t-SNAREs on the target membrane. These interactions are proposed to mediate aspects of the specificity of vesicle trafficking and to promote fusion of the lipid bilayers. Involved in vesicular transport from the late endosomes to the trans-Golgi network. Along with VAMP7, involved in an non-conventional RAB1-dependent traffic route to the cell surface used by KCNIP1 and KCND2. May be concerned with increased secretion of cytokines associated with cellular senescence. The sequence is that of Vesicle transport through interaction with t-SNAREs homolog 1A (Vti1a) from Rattus norvegicus (Rat).